A 275-amino-acid chain; its full sequence is Replication protein A 32 kDa subunit (275 aa).

Residues 23–47 (MQSPGGFGSPAPTQGEKKSRSRSQQ) form a disordered region. Positions 76 to 150 (VTIVGIVRHA…KSVVAFKIAP (75 aa)) form a DNA-binding region, OB.

It belongs to the replication factor A protein 2 family. As to quaternary structure, component of the replication protein A complex (RPA/RP-A), a heterotrimeric complex composed of RPA1, RPA2 and RPA3. Post-translationally, differentially phosphorylated throughout the cell cycle, becoming phosphorylated at the G1-S transition and dephosphorylated in late mitosis. Phosphorylation increases upon replication fork stalling.

The protein resides in the nucleus. Its subcellular location is the PML body. Its function is as follows. As part of the heterotrimeric replication protein A complex (RPA/RP-A), binds and stabilizes single-stranded DNA intermediates, that form during DNA replication or upon DNA stress. It prevents their reannealing and in parallel, recruits and activates different proteins and complexes involved in DNA metabolism. Thereby, it plays an essential role both in DNA replication and the cellular response to DNA damage. This chain is Replication protein A 32 kDa subunit (rpa2), found in Xenopus tropicalis (Western clawed frog).